We begin with the raw amino-acid sequence, 336 residues long: Biotin synthase (336 aa).

Residues 57 to 286 enclose the Radical SAM core domain; the sequence is HHGKSIDLCS…RAIVRTAGGR (230 aa). The [4Fe-4S] cluster site is built by Cys75, Cys79, and Cys82. 4 residues coordinate [2Fe-2S] cluster: Ser119, Cys151, Cys211, and Arg281.

The protein belongs to the radical SAM superfamily. Biotin synthase family. Homodimer. [4Fe-4S] cluster serves as cofactor. The cofactor is [2Fe-2S] cluster.

The catalysed reaction is (4R,5S)-dethiobiotin + (sulfur carrier)-SH + 2 reduced [2Fe-2S]-[ferredoxin] + 2 S-adenosyl-L-methionine = (sulfur carrier)-H + biotin + 2 5'-deoxyadenosine + 2 L-methionine + 2 oxidized [2Fe-2S]-[ferredoxin]. Its pathway is cofactor biosynthesis; biotin biosynthesis; biotin from 7,8-diaminononanoate: step 2/2. Its function is as follows. Catalyzes the conversion of dethiobiotin (DTB) to biotin by the insertion of a sulfur atom into dethiobiotin via a radical-based mechanism. This chain is Biotin synthase, found in Desulfotalea psychrophila (strain LSv54 / DSM 12343).